We begin with the raw amino-acid sequence, 587 residues long: 2-succinyl-5-enolpyruvyl-6-hydroxy-3-cyclohexene-1-carboxylate synthase (587 aa).

It belongs to the TPP enzyme family. MenD subfamily. As to quaternary structure, homodimer. Mg(2+) serves as cofactor. It depends on Mn(2+) as a cofactor. Requires thiamine diphosphate as cofactor.

It carries out the reaction isochorismate + 2-oxoglutarate + H(+) = 5-enolpyruvoyl-6-hydroxy-2-succinyl-cyclohex-3-ene-1-carboxylate + CO2. It functions in the pathway quinol/quinone metabolism; 1,4-dihydroxy-2-naphthoate biosynthesis; 1,4-dihydroxy-2-naphthoate from chorismate: step 2/7. The protein operates within quinol/quinone metabolism; menaquinone biosynthesis. Functionally, catalyzes the thiamine diphosphate-dependent decarboxylation of 2-oxoglutarate and the subsequent addition of the resulting succinic semialdehyde-thiamine pyrophosphate anion to isochorismate to yield 2-succinyl-5-enolpyruvyl-6-hydroxy-3-cyclohexene-1-carboxylate (SEPHCHC). In Chloroflexus aurantiacus (strain ATCC 29366 / DSM 635 / J-10-fl), this protein is 2-succinyl-5-enolpyruvyl-6-hydroxy-3-cyclohexene-1-carboxylate synthase.